Reading from the N-terminus, the 116-residue chain is Nitrogenase-stabilizing/protective protein NifW (116 aa).

Belongs to the NifW family. Homotrimer; associates with NifD.

May protect the nitrogenase Fe-Mo protein from oxidative damage. This Rhodopseudomonas palustris (strain TIE-1) protein is Nitrogenase-stabilizing/protective protein NifW.